A 286-amino-acid chain; its full sequence is Acetylglutamate kinase (286 aa).

Residues 69-70 (GG), R91, and N185 contribute to the substrate site.

The protein belongs to the acetylglutamate kinase family. ArgB subfamily.

Its subcellular location is the cytoplasm. It catalyses the reaction N-acetyl-L-glutamate + ATP = N-acetyl-L-glutamyl 5-phosphate + ADP. The protein operates within amino-acid biosynthesis; L-arginine biosynthesis; N(2)-acetyl-L-ornithine from L-glutamate: step 2/4. Functionally, catalyzes the ATP-dependent phosphorylation of N-acetyl-L-glutamate. The protein is Acetylglutamate kinase of Chlorobium chlorochromatii (strain CaD3).